Reading from the N-terminus, the 385-residue chain is 6-hydroxynicotinate 3-monooxygenase (385 aa).

Residues 1–20 (MSQSPRIAVVGAGLGGAAAA) form the signal peptide. Residues glycine 15, 34 to 35 (EQ), histidine 47, arginine 108, and leucine 130 each bind FAD. Histidine 47 functions as the Proton acceptor in the catalytic mechanism. The active-site Proton acceptor is tyrosine 215. Residues aspartate 294 and 307–308 (AA) contribute to the FAD site.

Belongs to the 6-hydroxynicotinate 3-monooxygenase family. As to quaternary structure, monomer. FAD is required as a cofactor.

It catalyses the reaction 6-hydroxynicotinate + NADH + O2 + 2 H(+) = 2,5-dihydroxypyridine + CO2 + NAD(+) + H2O. Its activity is regulated as follows. Inhibited competitively by nicotinic acid with a Ki of 0.49 mM. Inhibited by thiol-specific compounds p-chloromercuribenzoate, DTNB, Ag(2)SO(4), HgCl(2), CuCl(2) and N-ethylmaleimide. No inhibition by o-phenanthroline, 8-hydroxyquinoline, EDTA, disodium 4,5-dihydroxy-m-benzenedisulfonate, fluoride, azide, KCl, LiCl, NaCl, BaCl(2), MnCl(2), MgCl(2), PBCl, ZnCl(2), CoCl(2), SnCl(2), FeSO(4), FeCl(3), NiCl(2), CdCl(2), AlCl(3), iodoacetic acid, hydro-xylamine, phenylhydrazine, semicarbazide, cysteamine, alpha,alpha-dipyridyl and urea. Its function is as follows. Flavin-dependent monooxygenase (FMO) that catalyzes the decarboxylative hydroxylation of 6-hydroxynicotinic acid (6-HNA) to 2,5-dihydroxypyridine (2,5-DHP) with concomitant oxidation of NADH, a step in the aerobic nicotinate degradation pathway. Uses NADH in preference to NADPH as an electron donor. This Pseudomonas fluorescens protein is 6-hydroxynicotinate 3-monooxygenase (nicC).